Here is a 465-residue protein sequence, read N- to C-terminus: Exoenzymes regulatory protein AepA (465 aa).

The signal sequence occupies residues 1 to 21 (MKFNVKMLSVTLGLFTSHAFA).

It belongs to the metallo-dependent hydrolases superfamily.

Involved in the control of extracellular enzymes production. Stimulates PEL, PEH, CEL, and PRT production. The protein is Exoenzymes regulatory protein AepA (aepA) of Pectobacterium carotovorum subsp. carotovorum (Erwinia carotovora subsp. carotovora).